A 142-amino-acid polypeptide reads, in one-letter code: 3-hydroxyacyl-[acyl-carrier-protein] dehydratase FabZ (142 aa).

His49 is an active-site residue.

It belongs to the thioester dehydratase family. FabZ subfamily.

The protein resides in the cytoplasm. The catalysed reaction is a (3R)-hydroxyacyl-[ACP] = a (2E)-enoyl-[ACP] + H2O. Its function is as follows. Involved in unsaturated fatty acids biosynthesis. Catalyzes the dehydration of short chain beta-hydroxyacyl-ACPs and long chain saturated and unsaturated beta-hydroxyacyl-ACPs. This Clostridium novyi (strain NT) protein is 3-hydroxyacyl-[acyl-carrier-protein] dehydratase FabZ.